The chain runs to 89 residues: Small ribosomal subunit protein uS19 (89 aa).

It belongs to the universal ribosomal protein uS19 family.

Functionally, protein S19 forms a complex with S13 that binds strongly to the 16S ribosomal RNA. In Xylella fastidiosa (strain M12), this protein is Small ribosomal subunit protein uS19.